Here is a 364-residue protein sequence, read N- to C-terminus: Chorismate synthase (364 aa).

Arg47 provides a ligand contact to NADP(+). FMN-binding positions include 125–127 (RAS), Gly288, 303–307 (KPTAT), and Arg329.

The protein belongs to the chorismate synthase family. Homotetramer. It depends on FMNH2 as a cofactor.

The enzyme catalyses 5-O-(1-carboxyvinyl)-3-phosphoshikimate = chorismate + phosphate. The protein operates within metabolic intermediate biosynthesis; chorismate biosynthesis; chorismate from D-erythrose 4-phosphate and phosphoenolpyruvate: step 7/7. In terms of biological role, catalyzes the anti-1,4-elimination of the C-3 phosphate and the C-6 proR hydrogen from 5-enolpyruvylshikimate-3-phosphate (EPSP) to yield chorismate, which is the branch point compound that serves as the starting substrate for the three terminal pathways of aromatic amino acid biosynthesis. This reaction introduces a second double bond into the aromatic ring system. This Synechococcus sp. (strain CC9902) protein is Chorismate synthase.